A 194-amino-acid polypeptide reads, in one-letter code: Phosphoheptose isomerase (194 aa).

The SIS domain maps to 37–194 (IANSFKQGGK…LIEFEMAKTA (158 aa)). 52 to 54 (NGG) contributes to the substrate binding site. Zn(2+) contacts are provided by His-61 and Glu-65. Residues Glu-65, 93–94 (ND), 119–121 (STS), Ser-124, and Gln-172 contribute to the substrate site. Residues Gln-172 and His-180 each contribute to the Zn(2+) site.

Belongs to the SIS family. GmhA subfamily. In terms of assembly, homotetramer. Zn(2+) serves as cofactor.

It localises to the cytoplasm. The catalysed reaction is 2 D-sedoheptulose 7-phosphate = D-glycero-alpha-D-manno-heptose 7-phosphate + D-glycero-beta-D-manno-heptose 7-phosphate. The protein operates within carbohydrate biosynthesis; D-glycero-D-manno-heptose 7-phosphate biosynthesis; D-glycero-alpha-D-manno-heptose 7-phosphate and D-glycero-beta-D-manno-heptose 7-phosphate from sedoheptulose 7-phosphate: step 1/1. It functions in the pathway bacterial outer membrane biogenesis; LOS core biosynthesis. Catalyzes the isomerization of sedoheptulose 7-phosphate in D-glycero-D-manno-heptose 7-phosphate. The chain is Phosphoheptose isomerase from Haemophilus ducreyi (strain 35000HP / ATCC 700724).